Consider the following 29-residue polypeptide: Trypsin inhibitor 3 (29 aa).

Disulfide bonds link C3–C20, C10–C22, and C16–C28.

The protein belongs to the protease inhibitor I7 (squash-type serine protease inhibitor) family.

The protein localises to the secreted. Functionally, strongly inhibits trypsin, weakly inhibits chymotrypsin. This Cyclanthera pedata (Achocha) protein is Trypsin inhibitor 3.